The following is a 243-amino-acid chain: Urease accessory protein UreF 2 (243 aa).

This sequence belongs to the UreF family. As to quaternary structure, ureD, UreF and UreG form a complex that acts as a GTP-hydrolysis-dependent molecular chaperone, activating the urease apoprotein by helping to assemble the nickel containing metallocenter of UreC. The UreE protein probably delivers the nickel.

The protein resides in the cytoplasm. Required for maturation of urease via the functional incorporation of the urease nickel metallocenter. In terms of biological role, disrupting the ure2 operon has no effect on urease activity or pathogen survival in BALB/c mice when administered orally. The sequence is that of Urease accessory protein UreF 2 from Brucella abortus (strain 2308).